We begin with the raw amino-acid sequence, 362 residues long: Myricetin 3'-O-methyltransferase 4 (362 aa).

An S-adenosyl-L-methionine-binding site is contributed by aspartate 229. The active-site Proton acceptor is histidine 267.

It belongs to the class I-like SAM-binding methyltransferase superfamily. Cation-independent O-methyltransferase family. As to quaternary structure, homodimer. Mainly expressed in stem and petiole trichomes.

The catalysed reaction is myricetin + S-adenosyl-L-methionine = laricitrin + S-adenosyl-L-homocysteine + H(+). The protein operates within flavonoid metabolism. Its function is as follows. Flavonoid 3'-O-methyltransferase involved in the biosynthesis of polymethoxylated flavonoids natural products such as myricetin derivatives, aroma compounds possessing antioxidant properties and exhibiting pharmacological activities such as anti-carcinogen, anti-viral, anti-thrombotic, anti-diabetic, anti-atherosclerotic, and anti-inflammatory effects. Catalyzes S-adenosylmethionine-dependent regioselective 3'-O-methylation of flavonoids; active on various hydroxylated flavonoid substrates, including myricetin, thus producing 3'-methyl myricetin (laricitrin). This is Myricetin 3'-O-methyltransferase 4 from Solanum lycopersicum (Tomato).